We begin with the raw amino-acid sequence, 180 residues long: Ribosome maturation factor RimM (180 aa).

Positions 99 to 179 (NNEYYWKDIV…IVIKNWKQTF (81 aa)) constitute a PRC barrel domain.

It belongs to the RimM family. As to quaternary structure, binds ribosomal protein uS19.

The protein localises to the cytoplasm. Functionally, an accessory protein needed during the final step in the assembly of 30S ribosomal subunit, possibly for assembly of the head region. Essential for efficient processing of 16S rRNA. May be needed both before and after RbfA during the maturation of 16S rRNA. It has affinity for free ribosomal 30S subunits but not for 70S ribosomes. The chain is Ribosome maturation factor RimM from Buchnera aphidicola subsp. Baizongia pistaciae (strain Bp).